Here is a 73-residue protein sequence, read N- to C-terminus: Disintegrin lachesin (73 aa).

Positions E1–G73 constitute a Disintegrin domain. 6 cysteine pairs are disulfide-bonded: C6–C21, C8–C16, C15–C38, C29–C35, C34–C59, and C47–C66. The Cell attachment site motif lies at R51 to D53. The tract at residues R51–G73 is disordered.

This sequence belongs to the venom metalloproteinase (M12B) family. P-II subfamily. P-IIa sub-subfamily. Monomer (disintegrin). Expressed by the venom gland.

The protein resides in the secreted. Functionally, inhibits fibrinogen interaction with platelets. Acts by binding to alpha-IIb/beta-3 (ITGA2B/ITGB3) on the platelet surface and inhibits aggregation induced by ADP, thrombin, platelet-activating factor and collagen. This Lachesis muta muta (Bushmaster) protein is Disintegrin lachesin.